Here is a 588-residue protein sequence, read N- to C-terminus: Adenine deaminase (588 aa).

It belongs to the metallo-dependent hydrolases superfamily. Adenine deaminase family. Homodimer. The cofactor is Mn(2+).

It catalyses the reaction adenine + H2O + H(+) = hypoxanthine + NH4(+). The polypeptide is Adenine deaminase (Escherichia coli O9:H4 (strain HS)).